The sequence spans 807 residues: MPKQDSLWLKSLRWIQKHLVHTIVVPQDPFADLNLDASRPLAYVMKTESLSDIAALSEITTKLGLPSPYEPLVVNGVVAPRVVCLEGRKPLFGERASNEPFLECFMRLLAVHKEKPELDIQLVPVSLYWGRTPGKEDDTMKAAVLERENPTWLRKCLMILFLGRHNFVQFSNAVSLRYMADEHGTDMGIAHKLARVARVHFRRQRKVMTGPVLPNRQALFHSLLKSESLRKAIQEEAASKKISETQARETAIEYLDEIAANYSDSLVRIAERFLTWLWNKLYSGINIKGAEQIRQLHHDGHEIVYVPCHRSHMDYLLLSYILYYQGMVPPHIAAGINLNFWPAGPLFRRGGAFFIRRSFNGNKLYTAVFREYLDQLFAKGYSVEYFSEGGRSRTGRLLAPKTGMIAMTINSVLRGIERPVTLVPVYLGYDHVMEVATYHKELSGKKKQKESVWQVFGAIRKLGNFGQGYVNFGEPITLQNFLNETAPNWRTEVADDPEQKPTWLTPAVNVLANRVMTRINDAAAASSITLTSLVLLASEQNALERCLLERQLDLYLTLLKRVPYTSFTSVAEGDGKHLVQQGLELNKFSISADPLGEIVSIDANQAITMTYYRNNIIHLFIIPSLIASCLTNNKQISRASILGIVNDFYPLLKAELFMGIKDLPSYVNQVLDLFIEQGLVQESDTLSVVTERTSQMLLLAGSVSETLQRYAIIFNLLAHRPKMERSELESESHLLAQRLGALHGITAPEFYDKKLYNTLSVKLKELGYFSEKEDKSDVERIRDQANSLLRASVRQTIVASVTAEHIV.

The HXXXXD motif signature appears at 308–313 (CHRSHM).

Belongs to the GPAT/DAPAT family.

The protein resides in the cell inner membrane. The enzyme catalyses sn-glycerol 3-phosphate + an acyl-CoA = a 1-acyl-sn-glycero-3-phosphate + CoA. It participates in phospholipid metabolism; CDP-diacylglycerol biosynthesis; CDP-diacylglycerol from sn-glycerol 3-phosphate: step 1/3. This Shewanella sp. (strain MR-7) protein is Glycerol-3-phosphate acyltransferase.